The following is a 203-amino-acid chain: Lipoprotein MlpJ (203 aa).

An N-terminal signal peptide occupies residues 1-17; it reads MKIINILFCISLLLLNS. The N-palmitoyl cysteine moiety is linked to residue cysteine 18. Residue cysteine 18 is the site of S-diacylglycerol cysteine attachment. Residues 26-47 form a disordered region; that stretch reads LKNNAQQTKSRKKRDLSQEELP.

It belongs to the Multicopy lipoprotein (Mlp) family.

Its subcellular location is the cell outer membrane. An outer membrane protein that may participate in pathogenesis. Some human Lyme disease patients have antibodies against this protein. The Mlp proteins probably undergo intragenic recombination, generating new alleles. In Borreliella burgdorferi (strain ATCC 35210 / DSM 4680 / CIP 102532 / B31) (Borrelia burgdorferi), this protein is Lipoprotein MlpJ.